Consider the following 396-residue polypeptide: Alanine racemase (396 aa).

Catalysis depends on Lys46, which acts as the Proton acceptor; specific for D-alanine. An N6-(pyridoxal phosphate)lysine modification is found at Lys46. Residue Arg145 coordinates substrate. Tyr280 acts as the Proton acceptor; specific for L-alanine in catalysis. Met328 is a binding site for substrate.

Belongs to the alanine racemase family. Requires pyridoxal 5'-phosphate as cofactor.

The catalysed reaction is L-alanine = D-alanine. Its pathway is amino-acid biosynthesis; D-alanine biosynthesis; D-alanine from L-alanine: step 1/1. Its function is as follows. Catalyzes the interconversion of L-alanine and D-alanine. May also act on other amino acids. This Brucella abortus (strain 2308) protein is Alanine racemase (alr).